The following is a 176-amino-acid chain: Imidazoleglycerol-phosphate dehydratase (176 aa).

This sequence belongs to the imidazoleglycerol-phosphate dehydratase family.

Its subcellular location is the cytoplasm. It carries out the reaction D-erythro-1-(imidazol-4-yl)glycerol 3-phosphate = 3-(imidazol-4-yl)-2-oxopropyl phosphate + H2O. It participates in amino-acid biosynthesis; L-histidine biosynthesis; L-histidine from 5-phospho-alpha-D-ribose 1-diphosphate: step 6/9. The sequence is that of Imidazoleglycerol-phosphate dehydratase from Pyrococcus furiosus (strain ATCC 43587 / DSM 3638 / JCM 8422 / Vc1).